The sequence spans 182 residues: Translation initiation factor IF-3 (182 aa).

This sequence belongs to the IF-3 family. Monomer.

The protein localises to the cytoplasm. Functionally, IF-3 binds to the 30S ribosomal subunit and shifts the equilibrium between 70S ribosomes and their 50S and 30S subunits in favor of the free subunits, thus enhancing the availability of 30S subunits on which protein synthesis initiation begins. The protein is Translation initiation factor IF-3 of Tropheryma whipplei (strain TW08/27) (Whipple's bacillus).